Reading from the N-terminus, the 348-residue chain is D-alanine--D-alanine ligase (348 aa).

Positions K132–R334 constitute an ATP-grasp domain. E162–E217 contacts ATP. Mg(2+)-binding residues include D288, E301, and N303.

Belongs to the D-alanine--D-alanine ligase family. The cofactor is Mg(2+). It depends on Mn(2+) as a cofactor.

It is found in the cytoplasm. It catalyses the reaction 2 D-alanine + ATP = D-alanyl-D-alanine + ADP + phosphate + H(+). Its pathway is cell wall biogenesis; peptidoglycan biosynthesis. Cell wall formation. The chain is D-alanine--D-alanine ligase from Streptococcus equi subsp. equi (strain 4047).